Reading from the N-terminus, the 144-residue chain is Endoribonuclease YbeY (144 aa).

Histidine 108, histidine 112, and histidine 118 together coordinate Zn(2+).

It belongs to the endoribonuclease YbeY family. Zn(2+) is required as a cofactor.

The protein localises to the cytoplasm. Single strand-specific metallo-endoribonuclease involved in late-stage 70S ribosome quality control and in maturation of the 3' terminus of the 16S rRNA. This is Endoribonuclease YbeY from Phytoplasma australiense.